A 90-amino-acid chain; its full sequence is Small ribosomal subunit protein bS20 (90 aa).

Residues 1-10 (MANHKSTQKS) are compositionally biased toward polar residues. Positions 1 to 25 (MANHKSTQKSIRQDQKRNLINKSRK) are disordered.

The protein belongs to the bacterial ribosomal protein bS20 family.

Its function is as follows. Binds directly to 16S ribosomal RNA. The protein is Small ribosomal subunit protein bS20 of Orientia tsutsugamushi (strain Ikeda) (Rickettsia tsutsugamushi).